Reading from the N-terminus, the 86-residue chain is Alpha-toxin TbTx5 (86 aa).

Residues 1 to 19 (MNDFVFLVVACLLTAGTEG) form the signal peptide. Residues 21 to 82 (KDGYPVEGDN…EPTKTNGRCK (62 aa)) enclose the LCN-type CS-alpha/beta domain. 4 disulfide bridges follow: Cys-31–Cys-81, Cys-35–Cys-57, Cys-43–Cys-64, and Cys-47–Cys-66. A Proline amide modification is found at Pro-83.

This sequence belongs to the long (4 C-C) scorpion toxin superfamily. Sodium channel inhibitor family. Alpha subfamily. As to expression, expressed by the venom gland.

It is found in the secreted. Its function is as follows. Alpha toxins bind voltage-independently at site-3 of sodium channels (Nav) and inhibit the inactivation of the activated channels, thereby blocking neuronal transmission. In Tityus bahiensis (Brazilian scorpion), this protein is Alpha-toxin TbTx5.